The sequence spans 457 residues: Antizyme inhibitor 2 (457 aa).

Residues 115–138 (QVAQIKYAAKHGVRLLSFDNEVEL) form a necessary for polyamine uptake stimulation region.

The protein belongs to the Orn/Lys/Arg decarboxylase class-II family. ODC antizyme inhibitor subfamily. As to quaternary structure, monomer. Interacts with OAZ1, OAZ2 and OAZ3; this interaction disrupts the interaction between the antizyme and ODC1. Does not form a heterodimer with ODC1. Ubiquitinated, leading to its proteasomal degradation; a process that is reduced in presence of antizymes. May also be degraded through the lysosomal degradative pathway in a proteasomal-independent manner.

It is found in the nucleus. Its subcellular location is the cytoplasm. The protein resides in the perinuclear region. It localises to the membrane. The protein localises to the cytoplasmic vesicle. It is found in the endoplasmic reticulum-Golgi intermediate compartment. Its subcellular location is the golgi apparatus. The protein resides in the cis-Golgi network. It localises to the trans-Golgi network. The protein localises to the cytoplasmic granule. It is found in the cell projection. Its subcellular location is the axon. The protein resides in the dendrite. It localises to the perikaryon. Functionally, antizyme inhibitor (AZI) protein that positively regulates ornithine decarboxylase (ODC) activity and polyamine uptake. AZI is an enzymatically inactive ODC homolog that counteracts the negative effect of ODC antizymes (AZs) OAZ1, OAZ2 and OAZ3 on ODC activity by competing with ODC for antizyme-binding. Inhibits antizyme-dependent ODC degradation and releases ODC monomers from their inactive complex with antizymes, leading to formation of the catalytically active ODC homodimer and restoring polyamine production. Participates in the morphological integrity of the trans-Golgi network (TGN) and functions as a regulator of intracellular secretory vesicle trafficking. The chain is Antizyme inhibitor 2 (Azin2) from Rattus norvegicus (Rat).